The sequence spans 263 residues: Sulfur carrier protein FdhD (263 aa).

Cys-107 acts as the Cysteine persulfide intermediate in catalysis.

This sequence belongs to the FdhD family.

The protein localises to the cytoplasm. Required for formate dehydrogenase (FDH) activity. Acts as a sulfur carrier protein that transfers sulfur from IscS to the molybdenum cofactor prior to its insertion into FDH. The protein is Sulfur carrier protein FdhD of Geobacillus kaustophilus (strain HTA426).